A 343-amino-acid polypeptide reads, in one-letter code: Holliday junction branch migration complex subunit RuvB (343 aa).

The tract at residues methionine 1 to glutamine 20 is disordered. Residues methionine 1 to tyrosine 185 are large ATPase domain (RuvB-L). ATP is bound by residues leucine 24, arginine 25, glycine 66, lysine 69, threonine 70, threonine 71, glutamate 132–phenylalanine 134, arginine 175, tyrosine 185, and arginine 222. A Mg(2+)-binding site is contributed by threonine 70. Residues glutamate 186–glutamate 256 form a small ATPAse domain (RuvB-S) region. The tract at residues arginine 259–leucine 343 is head domain (RuvB-H). Positions 295, 314, and 319 each coordinate DNA.

It belongs to the RuvB family. In terms of assembly, homohexamer. Forms an RuvA(8)-RuvB(12)-Holliday junction (HJ) complex. HJ DNA is sandwiched between 2 RuvA tetramers; dsDNA enters through RuvA and exits via RuvB. An RuvB hexamer assembles on each DNA strand where it exits the tetramer. Each RuvB hexamer is contacted by two RuvA subunits (via domain III) on 2 adjacent RuvB subunits; this complex drives branch migration. In the full resolvosome a probable DNA-RuvA(4)-RuvB(12)-RuvC(2) complex forms which resolves the HJ.

Its subcellular location is the cytoplasm. The catalysed reaction is ATP + H2O = ADP + phosphate + H(+). Functionally, the RuvA-RuvB-RuvC complex processes Holliday junction (HJ) DNA during genetic recombination and DNA repair, while the RuvA-RuvB complex plays an important role in the rescue of blocked DNA replication forks via replication fork reversal (RFR). RuvA specifically binds to HJ cruciform DNA, conferring on it an open structure. The RuvB hexamer acts as an ATP-dependent pump, pulling dsDNA into and through the RuvAB complex. RuvB forms 2 homohexamers on either side of HJ DNA bound by 1 or 2 RuvA tetramers; 4 subunits per hexamer contact DNA at a time. Coordinated motions by a converter formed by DNA-disengaged RuvB subunits stimulates ATP hydrolysis and nucleotide exchange. Immobilization of the converter enables RuvB to convert the ATP-contained energy into a lever motion, pulling 2 nucleotides of DNA out of the RuvA tetramer per ATP hydrolyzed, thus driving DNA branch migration. The RuvB motors rotate together with the DNA substrate, which together with the progressing nucleotide cycle form the mechanistic basis for DNA recombination by continuous HJ branch migration. Branch migration allows RuvC to scan DNA until it finds its consensus sequence, where it cleaves and resolves cruciform DNA. The polypeptide is Holliday junction branch migration complex subunit RuvB (Magnetococcus marinus (strain ATCC BAA-1437 / JCM 17883 / MC-1)).